The primary structure comprises 106 residues: UPF0145 protein NE1032 (106 aa).

It belongs to the UPF0145 family.

The polypeptide is UPF0145 protein NE1032 (Nitrosomonas europaea (strain ATCC 19718 / CIP 103999 / KCTC 2705 / NBRC 14298)).